Reading from the N-terminus, the 906-residue chain is MNPADADEEQRVSSVPAHRCRPGRIPSRSAETETEESSAEVAADTIGGDDSELEEGPLPGGDKEASAGNTNVSSGVACVAGFTSGGGVVSWRPESPSPDGTPSVLSLTRDSGPAVPSRGGRVSSGLSTFNPAGATRMELDSVEEEDDFGASLCKVSPPIQATRMLMGKKCHCHGYWGKFRFCGVQEPARELPSDRNALWREMDTVSRHSAGLGSFRLFQLIMRHGPCLIRHSPRCDLLLGRFYFKANWARESRTPLCYASELCDESVRRFVLRHMEDLPKLAEETARFVELAGCWGLYAAILCLDKVCRQLHGQDESPGGVFLRIAVALTAAIENSRHSRIYRFHLDARFEGEVLESVLKRCRDGQLSLSTFTMSTVGFDRVPQYDFLISADPFSRDASWAAMCKWMSTLSCGVSVSVNVTRLNADVNSVIRCLGGYCDLIREKEVHRPVVRVFVDMWDVAAIRVINFILKESTSELTGVCYAFNVPSVLMKRYRAREQRYSLFGRPVSRRLSDLGQESAFEKEYSRCEQSCPKVVVNTDDFLKKMLLCALKGRASVVFVHHVVKYSIMADSVCLPPCLSPDMASCHFGECDMPVQRLTVNVARCVFARSDEQKLHLPDVVLGNTRRYFDLSVLRELVTEAVVWGNARLDALMSASEWWVESALEKLRPLHIGVAGLHTALMRLGFTYFASWDLIERIFEHMYFAAVRASVDLCKSGLPRCEWFERTIYQEGKFIFELYRLPRLSIASARWEALRADMLEFGLRNCQFLAVGPDDEVAHLWGVTPSVWASRGTVFEEETVWSLCPPNRECYFPTVVRRPLRVPVVNYAWLEQHQEEGKATQCLFQAAPAIQNDVEMAAVNLSVFVDQCVALVFYYDSGMTPDVLLARMLKWYHWRFKVGVYKYCAS.

Disordered regions lie at residues 1–70 (MNPA…AGNT) and 89–129 (VSWR…LSTF). Positions 98-109 (PDGTPSVLSLTR) are enriched in polar residues.

It belongs to the ribonucleoside diphosphate reductase large chain family.

Its subcellular location is the virion. It is found in the host cytoplasm. In terms of biological role, does not possess a ribonucleotide reductase activity. Betaherpesviruses probably use another strategy to expand the dNTP pool in a quiescent host cell. This is Ribonucleoside-diphosphate reductase large subunit-like protein from Human cytomegalovirus (strain AD169) (HHV-5).